We begin with the raw amino-acid sequence, 534 residues long: Peptide chain release factor 3 (534 aa).

Positions 9-278 (ARRRTFAIIS…FFVEHAPPPQ (270 aa)) constitute a tr-type G domain. GTP contacts are provided by residues 18 to 25 (SHPDAGKT), 86 to 90 (DTPGH), and 140 to 143 (NKLD).

It belongs to the TRAFAC class translation factor GTPase superfamily. Classic translation factor GTPase family. PrfC subfamily.

It is found in the cytoplasm. In terms of biological role, increases the formation of ribosomal termination complexes and stimulates activities of RF-1 and RF-2. It binds guanine nucleotides and has strong preference for UGA stop codons. It may interact directly with the ribosome. The stimulation of RF-1 and RF-2 is significantly reduced by GTP and GDP, but not by GMP. The sequence is that of Peptide chain release factor 3 from Xanthomonas campestris pv. campestris (strain 8004).